The following is a 191-amino-acid chain: dCTP deaminase, dUMP-forming (191 aa).

DCTP is bound by residues 101-106 (KSSLGR), aspartate 119, 127-129 (TLE), glutamine 148, tyrosine 162, and glutamine 174. Glutamate 129 serves as the catalytic Proton donor/acceptor. A disordered region spans residues 163–191 (GSAKYGSRYQGQRGPTPSRSYQNFHRTPI). Over residues 171-191 (YQGQRGPTPSRSYQNFHRTPI) the composition is skewed to polar residues.

This sequence belongs to the dCTP deaminase family. In terms of assembly, homotrimer.

The enzyme catalyses dCTP + 2 H2O = dUMP + NH4(+) + diphosphate. It functions in the pathway pyrimidine metabolism; dUMP biosynthesis; dUMP from dCTP: step 1/1. Bifunctional enzyme that catalyzes both the deamination of dCTP to dUTP and the hydrolysis of dUTP to dUMP without releasing the toxic dUTP intermediate. The protein is dCTP deaminase, dUMP-forming of Nocardioides sp. (strain ATCC BAA-499 / JS614).